Reading from the N-terminus, the 487-residue chain is mRNA cleavage and polyadenylation factor CLP1 (487 aa).

ATP contacts are provided by residues E19, K59, and 134 to 139 (NSGKTT).

It belongs to the Clp1 family. Clp1 subfamily. As to quaternary structure, component of a pre-mRNA cleavage factor complex. Interacts directly with PCF11.

The protein localises to the nucleus. In terms of biological role, required for endonucleolytic cleavage during polyadenylation-dependent pre-mRNA 3'-end formation. This chain is mRNA cleavage and polyadenylation factor CLP1, found in Laccaria bicolor (strain S238N-H82 / ATCC MYA-4686) (Bicoloured deceiver).